Consider the following 122-residue polypeptide: Small ribosomal subunit protein uS13 (122 aa).

A disordered region spans residues 97 to 122; it reads PVRGQRTKTNARTRKGPARTVAGKKK.

Belongs to the universal ribosomal protein uS13 family. As to quaternary structure, part of the 30S ribosomal subunit. Forms a loose heterodimer with protein S19. Forms two bridges to the 50S subunit in the 70S ribosome.

Functionally, located at the top of the head of the 30S subunit, it contacts several helices of the 16S rRNA. In the 70S ribosome it contacts the 23S rRNA (bridge B1a) and protein L5 of the 50S subunit (bridge B1b), connecting the 2 subunits; these bridges are implicated in subunit movement. Contacts the tRNAs in the A and P-sites. The sequence is that of Small ribosomal subunit protein uS13 from Geobacter sulfurreducens (strain ATCC 51573 / DSM 12127 / PCA).